Reading from the N-terminus, the 428-residue chain is S-adenosylmethionine synthase (428 aa).

Residue His14 coordinates ATP. A Mg(2+)-binding site is contributed by Asp16. Glu42 contacts K(+). Residues Glu55 and Gln98 each coordinate L-methionine. The segment at 98 to 108 (QSGDINRGVER) is flexible loop. ATP-binding positions include 165-167 (DAK), 251-252 (KF), Asp260, 266-267 (RK), Ala283, and Lys287. Asp260 is a binding site for L-methionine. Residue Lys291 participates in L-methionine binding.

The protein belongs to the AdoMet synthase family. In terms of assembly, homotetramer; dimer of dimers. Mg(2+) is required as a cofactor. Requires K(+) as cofactor.

The protein localises to the cytoplasm. The catalysed reaction is L-methionine + ATP + H2O = S-adenosyl-L-methionine + phosphate + diphosphate. It functions in the pathway amino-acid biosynthesis; S-adenosyl-L-methionine biosynthesis; S-adenosyl-L-methionine from L-methionine: step 1/1. Functionally, catalyzes the formation of S-adenosylmethionine (AdoMet) from methionine and ATP. The overall synthetic reaction is composed of two sequential steps, AdoMet formation and the subsequent tripolyphosphate hydrolysis which occurs prior to release of AdoMet from the enzyme. This chain is S-adenosylmethionine synthase, found in Parabacteroides distasonis (strain ATCC 8503 / DSM 20701 / CIP 104284 / JCM 5825 / NCTC 11152).